A 374-amino-acid polypeptide reads, in one-letter code: Peptide chain release factor 2 (374 aa).

At Gln256 the chain carries N5-methylglutamine.

Belongs to the prokaryotic/mitochondrial release factor family. Post-translationally, methylated by PrmC. Methylation increases the termination efficiency of RF2.

It is found in the cytoplasm. Its function is as follows. Peptide chain release factor 2 directs the termination of translation in response to the peptide chain termination codons UGA and UAA. In Mycobacterium leprae (strain Br4923), this protein is Peptide chain release factor 2.